A 147-amino-acid polypeptide reads, in one-letter code: Leghemoglobin-1 (147 aa).

In terms of domain architecture, Globin spans 2 to 147; it reads SFTDKQEALV…LATAIKKAMS (146 aa). 2 positions are modified to nitrated tyrosine: Y25 and Y30. Residue S45 participates in heme b binding. Position 45 is a phosphoserine (S45). H62 contacts O2. Residues K65, H94, and K97 each coordinate heme b. Y135 carries the post-translational modification Nitrated tyrosine.

This sequence belongs to the plant globin family. Monomer. Post-translationally, nitrated in effective nodules and particularly in hypoxic conditions; this mechanism may play a protective role in the symbiosis by buffering toxic peroxynitrite NO(2)(-). Nitration level decrease during nodule senescence. In terms of processing, phosphorylation at Ser-45 disrupts the molecular environment of its porphyrin ring oxygen binding pocket, thus leading to a reduced oxygen consumption and to the delivery of oxygen O(2) to symbiosomes. As to expression, root nodules.

The protein localises to the cytoplasm. It localises to the cytosol. The protein resides in the nucleus. Leghemoglobin that reversibly binds oxygen O(2) through a pentacoordinated heme iron. In root nodules, facilitates the diffusion of oxygen to the bacteroids while preventing the bacterial nitrogenase from being inactivated by buffering dioxygen, nitric oxide and carbon monoxide, and promoting the formation of reactive oxygen species (ROS, e.g. H(2)O(2)). This role is essential for symbiotic nitrogen fixation (SNF). The polypeptide is Leghemoglobin-1 (Medicago sativa (Alfalfa)).